The chain runs to 1382 residues: DNA-directed RNA polymerase subunit beta (1382 aa).

Belongs to the RNA polymerase beta chain family. In terms of assembly, the RNAP catalytic core consists of 2 alpha, 1 beta, 1 beta' and 1 omega subunit. When a sigma factor is associated with the core the holoenzyme is formed, which can initiate transcription.

It catalyses the reaction RNA(n) + a ribonucleoside 5'-triphosphate = RNA(n+1) + diphosphate. Its function is as follows. DNA-dependent RNA polymerase catalyzes the transcription of DNA into RNA using the four ribonucleoside triphosphates as substrates. The sequence is that of DNA-directed RNA polymerase subunit beta from Anaplasma marginale (strain Florida).